Consider the following 1226-residue polypeptide: Methionine synthase (1226 aa).

The Hcy-binding domain occupies 7 to 327 (KVQIEKQLSE…EHIRQMALVV (321 aa)). Residues cysteine 249, cysteine 312, and cysteine 313 each contribute to the Zn(2+) site. Residues 358 to 619 (FINVGERTNV…VPEDLREAVE (262 aa)) enclose the Pterin-binding domain. In terms of domain architecture, B12-binding N-terminal spans 652–746 (SALEWRDWPV…FINASKEVGA (95 aa)). Methylcob(III)alamin-binding positions include glutamate 696, 758-762 (GDVHD), histidine 761, serine 806, threonine 810, and alanine 862. Residues 748-883 (NGKILLATVK…SNELKPSFVE (136 aa)) form the B12-binding domain. Positions 899–1226 (KQPRTKPVTL…AEKWLGPNLN (328 aa)) constitute an AdoMet activation domain. S-adenosyl-L-methionine contacts are provided by residues aspartate 949, arginine 1137, and 1192 to 1193 (YF).

This sequence belongs to the vitamin-B12 dependent methionine synthase family. Methylcob(III)alamin is required as a cofactor. The cofactor is Zn(2+).

The catalysed reaction is (6S)-5-methyl-5,6,7,8-tetrahydrofolate + L-homocysteine = (6S)-5,6,7,8-tetrahydrofolate + L-methionine. The protein operates within amino-acid biosynthesis; L-methionine biosynthesis via de novo pathway; L-methionine from L-homocysteine (MetH route): step 1/1. In terms of biological role, catalyzes the transfer of a methyl group from methyl-cobalamin to homocysteine, yielding enzyme-bound cob(I)alamin and methionine. Subsequently, remethylates the cofactor using methyltetrahydrofolate. The chain is Methionine synthase (metH) from Aliivibrio fischeri (Vibrio fischeri).